The sequence spans 729 residues: E3 ubiquitin-protein ligase Trim36 (729 aa).

An RING-type; degenerate zinc finger spans residues 33 to 84 (CPACKELFTHPLILPCQHSVCHKCVKELLLSLDDSFNDVASDSSNQSSPRLR). 2 B box-type zinc fingers span residues 154 to 192 (AIMCDLCKPPPQESTKSCMDCSASYCNECFKIYHPWGTV) and 207 to 249 (PKVL…VTTM). Zn(2+) is bound by residues cysteine 212, histidine 215, cysteine 235, and histidine 241. Residues 271–302 (ESQVKSQISELNLLMKETECNGERAKEEALAH) adopt a coiled-coil conformation. The COS domain occupies 356–413 (LKETDQSCFVQTAKQLHLRIQKATESLKSFRPAAQASFEDYVVNISKQTEVLGELSFF). The region spanning 416-511 (GIDIPEINEE…RELILHTPPA (96 aa)) is the Fibronectin type-III domain. Positions 509–723 (PPAPVFSFLF…LEEAITAKYL (215 aa)) constitute a B30.2/SPRY domain. Residues 606–626 (RDAASPRYEQDSGHDSGSEDA) form a disordered region. Residues 613 to 622 (YEQDSGHDSG) are compositionally biased toward basic and acidic residues.

The protein belongs to the TRIM/RBCC family. Interacts with CENPH. In terms of tissue distribution, expressed in testis. Strongly expressed in the neural tube region in 14.5 dpc embryos.

It is found in the cytoplasm. It localises to the cytoplasmic vesicle. Its subcellular location is the secretory vesicle. The protein resides in the acrosome. The protein localises to the cytoskeleton. It catalyses the reaction S-ubiquitinyl-[E2 ubiquitin-conjugating enzyme]-L-cysteine + [acceptor protein]-L-lysine = [E2 ubiquitin-conjugating enzyme]-L-cysteine + N(6)-ubiquitinyl-[acceptor protein]-L-lysine.. Functionally, E3 ubiquitin-protein ligase which mediates ubiquitination and subsequent proteasomal degradation of target proteins. Involved in chromosome segregation and cell cycle regulation. May play a role in the acrosome reaction and fertilization. This chain is E3 ubiquitin-protein ligase Trim36 (Trim36), found in Mus musculus (Mouse).